The primary structure comprises 145 residues: MREALKQAEIAFSKNEVPVGAVIVDRENQKIISKSYNNTEEKNNALYHAEIIAINEACRIISSKNLSDYDIYVTLEPCAMCAAAIAHSRLKRLFYGASDSKHGAVESNLRYFNSKACFHRPEIYSGIFAEDSALLMKGFFKKIRD.

The 116-residue stretch at Met1 to Ala116 folds into the CMP/dCMP-type deaminase domain. Residue His48 participates in Zn(2+) binding. Glu50 acts as the Proton donor in catalysis. Cys78 and Cys81 together coordinate Zn(2+).

Belongs to the cytidine and deoxycytidylate deaminase family. Homodimer. It depends on Zn(2+) as a cofactor.

It carries out the reaction adenosine(34) in tRNA + H2O + H(+) = inosine(34) in tRNA + NH4(+). Its function is as follows. Catalyzes the deamination of adenosine to inosine at the wobble position 34 of tRNA(Arg2). This Rickettsia bellii (strain RML369-C) protein is tRNA-specific adenosine deaminase.